Reading from the N-terminus, the 95-residue chain is Integration host factor subunit beta (95 aa).

Residues 56 to 76 (RAPRTGRNPKTGTSVELDGKY) are disordered.

It belongs to the bacterial histone-like protein family. In terms of assembly, heterodimer of an alpha and a beta chain.

Functionally, this protein is one of the two subunits of integration host factor, a specific DNA-binding protein that functions in genetic recombination as well as in transcriptional and translational control. The sequence is that of Integration host factor subunit beta from Shewanella woodyi (strain ATCC 51908 / MS32).